The following is a 285-amino-acid chain: MKVTVGPDPSLVYRPDVDPEVAKDKASFRNYTSGPLLDRVFTTYKLMHTHQTVDFVRSKHAQFGGFSYKKMTVMEAVDLLDGLVDESDPDVDFPNSFHAFQTAEGIRKAHPDKDWFHLVGLLHDLGKVLALFGEPQWAVVGDTFPVGCRPQASVVFCDSTFQDNPDLQDPRYSTELGMYQPHCGLDRVLMSWGHDEYMYQVMKFNKFSLPPEAFYMIRFHSFYPWHTGRDYQQLCSQQDLAMLPWVREFNKFDLYTKCPDLPDVDKLRPYYQGLIDKYCPGILSW.

Arg-29 contributes to the substrate binding site. Ser-33 carries the phosphoserine modification. 85-87 (DES) is a substrate binding site. Fe cation is bound by residues His-98, His-123, and Asp-124. Substrate-binding positions include Lys-127 and 141 to 142 (GD). His-194, His-220, and Asp-253 together coordinate Fe cation. A substrate-binding site is contributed by 220-221 (HS).

This sequence belongs to the myo-inositol oxygenase family. Fe cation serves as cofactor. Kidney specific.

It is found in the cytoplasm. It carries out the reaction myo-inositol + O2 = D-glucuronate + H2O + H(+). Its pathway is polyol metabolism; myo-inositol degradation into D-glucuronate; D-glucuronate from myo-inositol: step 1/1. This chain is Inositol oxygenase (MIOX), found in Homo sapiens (Human).